The sequence spans 53 residues: UPF0391 membrane protein ESA_03375 (53 aa).

The next 2 helical transmembrane spans lie at 4-24 (WGII…GGLA) and 28-48 (AGAA…SLFM).

It belongs to the UPF0391 family.

It is found in the cell membrane. The sequence is that of UPF0391 membrane protein ESA_03375 from Cronobacter sakazakii (strain ATCC BAA-894) (Enterobacter sakazakii).